The chain runs to 441 residues: uncharacterized protein (441 aa).

Residues 1–23 (MSRKYLLSLLLVGALVISVVASG) form the signal peptide. An N-acetylcysteine modification is found at Cys-24. The S-archaeol cysteine moiety is linked to residue Cys-24.

It belongs to the bacterial solute-binding protein 1 family.

Its subcellular location is the cell membrane. Functionally, probably part of a binding-protein-dependent transport system PH1214/15/16. This is an uncharacterized protein from Pyrococcus horikoshii (strain ATCC 700860 / DSM 12428 / JCM 9974 / NBRC 100139 / OT-3).